The chain runs to 700 residues: Glycine--tRNA ligase beta subunit (700 aa).

The protein belongs to the class-II aminoacyl-tRNA synthetase family. As to quaternary structure, tetramer of two alpha and two beta subunits.

It is found in the cytoplasm. The enzyme catalyses tRNA(Gly) + glycine + ATP = glycyl-tRNA(Gly) + AMP + diphosphate. This chain is Glycine--tRNA ligase beta subunit, found in Janthinobacterium sp. (strain Marseille) (Minibacterium massiliensis).